Here is a 237-residue protein sequence, read N- to C-terminus: Uridylate kinase (237 aa).

12–15 is a binding site for ATP; that stretch reads KLSG. Residues 20-25 form an involved in allosteric activation by GTP region; it reads GAEGFG. Glycine 54 serves as a coordination point for UMP. Residues glycine 55 and arginine 59 each coordinate ATP. UMP contacts are provided by residues aspartate 74 and 135 to 142; that span reads TGSPFFTT. The ATP site is built by threonine 162, tyrosine 168, and aspartate 171.

Belongs to the UMP kinase family. Homohexamer.

The protein resides in the cytoplasm. The catalysed reaction is UMP + ATP = UDP + ADP. It participates in pyrimidine metabolism; CTP biosynthesis via de novo pathway; UDP from UMP (UMPK route): step 1/1. Its activity is regulated as follows. Allosterically activated by GTP. Inhibited by UTP. Its function is as follows. Catalyzes the reversible phosphorylation of UMP to UDP. This Actinobacillus succinogenes (strain ATCC 55618 / DSM 22257 / CCUG 43843 / 130Z) protein is Uridylate kinase.